The following is a 208-amino-acid chain: Interferon epsilon (208 aa).

The N-terminal stretch at 1-21 (MIIKHFFGTVLVLLASTTIFS) is a signal peptide. Cysteines 53 and 163 form a disulfide. Asparagine 95 and asparagine 104 each carry an N-linked (GlcNAc...) asparagine glycan.

Belongs to the alpha/beta interferon family. As to expression, endometrium-specific.

It is found in the secreted. Its function is as follows. Type I interferon required for maintaining basal levels of IFN-regulated genes, including 2'-5'-oligoadenylate synthetase, IRF7 and ISG15, in the female reproductive tract. Directly mediates protection against viral and bacterial genital infections. This is Interferon epsilon (IFNE) from Homo sapiens (Human).